Consider the following 108-residue polypeptide: Nucleoid-associated protein CHAB381_0200 (108 aa).

It belongs to the YbaB/EbfC family. Homodimer.

The protein localises to the cytoplasm. It is found in the nucleoid. Binds to DNA and alters its conformation. May be involved in regulation of gene expression, nucleoid organization and DNA protection. This Campylobacter hominis (strain ATCC BAA-381 / DSM 21671 / CCUG 45161 / LMG 19568 / NCTC 13146 / CH001A) protein is Nucleoid-associated protein CHAB381_0200.